A 223-amino-acid chain; its full sequence is Thymidine kinase (223 aa).

ATP is bound by residues 19–26 (GPMFAGKT) and 96–99 (DEVQ). Glu-97 acts as the Proton acceptor in catalysis. Cys-153, Cys-156, Cys-191, and His-194 together coordinate Zn(2+).

The protein belongs to the thymidine kinase family. Homotetramer.

It is found in the cytoplasm. It carries out the reaction thymidine + ATP = dTMP + ADP + H(+). This is Thymidine kinase from Ureaplasma urealyticum serovar 10 (strain ATCC 33699 / Western).